A 348-amino-acid chain; its full sequence is D-alanine--D-alanine ligase (348 aa).

The ATP-grasp domain maps to 136–344; it reads KSVFKSYNLP…LEKLVASLIE (209 aa). 171 to 226 contacts ATP; that stretch reads NKIINYPCFIKPANLGSSVGITKAYSKEEFITGIEFAAKYDERIIVEKSIEGRELE. Mg(2+) is bound by residues D297, E311, and N313.

Belongs to the D-alanine--D-alanine ligase family. The cofactor is Mg(2+). Requires Mn(2+) as cofactor.

It is found in the cytoplasm. The catalysed reaction is 2 D-alanine + ATP = D-alanyl-D-alanine + ADP + phosphate + H(+). The protein operates within cell wall biogenesis; peptidoglycan biosynthesis. Functionally, cell wall formation. The polypeptide is D-alanine--D-alanine ligase (Prochlorococcus marinus (strain NATL1A)).